A 244-amino-acid chain; its full sequence is Probable H/ACA ribonucleoprotein complex subunit 1-like protein (244 aa).

2 disordered regions span residues 1–53 (MSFR…GGYD) and 145–244 (FLPQ…TKFE). 2 RGG-box regions span residues 4–51 (RGGR…GRGG) and 153–222 (RGRG…RGRG). Over residues 160–173 (RGGDRGGRGSDRGG) the composition is skewed to basic and acidic residues. Gly residues-rich tracts occupy residues 174–201 (RGGFGRGGGGGFRGGDRGGFGGGRGGFR) and 208–217 (FRGGRGGDFG). The span at 218 to 228 (GRGRGDFKRSY) shows a compositional bias: basic and acidic residues.

Belongs to the GAR1 family. As to quaternary structure, component of the small nucleolar ribonucleoprotein particle containing H/ACA-type snoRNAs (H/ACA snoRNPs).

The protein resides in the nucleus. The protein localises to the nucleolus. Its function is as follows. Required for ribosome biogenesis. Part of a complex which catalyzes pseudouridylation of rRNA. This involves the isomerization of uridine such that the ribose is subsequently attached to C5, instead of the normal N1. Pseudouridine ('psi') residues may serve to stabilize the conformation of rRNAs. Involved in phase separation into sub-nucleolar condensates. Essential for normal development and also plays a role in fertility. The protein is Probable H/ACA ribonucleoprotein complex subunit 1-like protein of Caenorhabditis elegans.